Reading from the N-terminus, the 337-residue chain is tRNA N6-adenosine threonylcarbamoyltransferase (337 aa).

2 residues coordinate Fe cation: H111 and H115. Substrate-binding positions include 134–138 (LVSGG), D167, G180, and N272. D300 lines the Fe cation pocket.

It belongs to the KAE1 / TsaD family. The cofactor is Fe(2+).

Its subcellular location is the cytoplasm. It catalyses the reaction L-threonylcarbamoyladenylate + adenosine(37) in tRNA = N(6)-L-threonylcarbamoyladenosine(37) in tRNA + AMP + H(+). In terms of biological role, required for the formation of a threonylcarbamoyl group on adenosine at position 37 (t(6)A37) in tRNAs that read codons beginning with adenine. Is involved in the transfer of the threonylcarbamoyl moiety of threonylcarbamoyl-AMP (TC-AMP) to the N6 group of A37, together with TsaE and TsaB. TsaD likely plays a direct catalytic role in this reaction. This Salmonella choleraesuis (strain SC-B67) protein is tRNA N6-adenosine threonylcarbamoyltransferase.